Reading from the N-terminus, the 61-residue chain is Short neurotoxin 1 (61 aa).

4 disulfide bridges follow: Cys-3–Cys-23, Cys-17–Cys-40, Cys-42–Cys-53, and Cys-54–Cys-59.

It belongs to the three-finger toxin family. Short-chain subfamily. Type I alpha-neurotoxin sub-subfamily. Expressed by the venom gland.

It is found in the secreted. Binds to muscle nicotinic acetylcholine receptor (nAChR) and inhibit acetylcholine from binding to the receptor, thereby impairing neuromuscular transmission. The polypeptide is Short neurotoxin 1 (Naja annulata annulata (Banded water cobra)).